Consider the following 1479-residue polypeptide: Tyrosine-protein kinase BAZ1B (1479 aa).

The region spanning 20–126 (EPLFTIPHTQ…GEECDFEVGK (107 aa)) is the WAC domain. The segment at 146-212 (EAVEKKSDGA…TSLKKGERKW (67 aa)) is disordered. 2 stretches are compositionally biased toward basic and acidic residues: residues 148–165 (VEKKSDGACDSPSSDKEN) and 173–195 (LQKKETVVKEDEGRRESINDRAR). 3 positions are modified to phosphoserine: Ser-152, Ser-158, and Ser-161. Residues 207 to 213 (KGERKWA) carry the C motif motif. Thr-266 carries the post-translational modification Phosphothreonine. The tract at residues 302–333 (NPSTKRRNTGSPDRKPSKKPKRDSSSLSSPLN) is disordered. Ser-325, Ser-330, Ser-345, Ser-361, and Ser-374 each carry phosphoserine. Disordered regions lie at residues 376–433 (NNNK…KTPK) and 448–472 (TQKMTRTPRSSGGVPRSSGKPHKHL). Basic residues predominate over residues 381-396 (HSFHIPKKGPAAKKPG). Polar residues predominate over residues 415–425 (GQKSTGNSKSP). Residues 454-465 (TPRSSGGVPRSS) are compositionally biased toward low complexity. Positions 537-587 (ASMSEEQRKEYLKKKRQELKERLREKAKERREREMLERLEKQKRFEDQELG) form a coiled coil. One can recognise a DDT domain in the interval 605–669 (NTLFGDVALV…LQTLLQDEIA (65 aa)). Phosphoserine is present on residues Ser-706, Ser-709, and Ser-717. Residues 774 to 809 (SAELWKERLAVLKEENDKKRAEKQKRKEMEARNKEN) are a coiled coil. Positions 789 to 813 (NDKKRAEKQKRKEMEARNKENGKEE) are disordered. A Glycyl lysine isopeptide (Lys-Gly) (interchain with G-Cter in SUMO1); alternate cross-link involves residue Lys-827. Lys-827 is covalently cross-linked (Glycyl lysine isopeptide (Lys-Gly) (interchain with G-Cter in SUMO2); alternate). Residues Lys-854, Lys-1043, Lys-1089, and Lys-1107 each participate in a glycyl lysine isopeptide (Lys-Gly) (interchain with G-Cter in SUMO2) cross-link. Residues 854 to 890 (KRKREIQERETKVRLEREAEEERMRKHKAAAEKAFQE) are a coiled coil. The PHD-type zinc finger occupies 1184-1234 (NARCKVCRKKGEDDKLILCDECNKAFHLFCLRPALYEVPDGEWQCPACQPP). A disordered region spans residues 1231-1324 (CQPPTARRNS…SRPKDDPEVD (94 aa)). Acidic residues predominate over residues 1254–1277 (SEGDESGEEEEEEEEEEEEEEDYE). The stretch at 1257 to 1284 (DESGEEEEEEEEEEEEEEDYEVAGLRLR) forms a coiled coil. Residues 1305-1316 (PGKKSHPARRSR) are compositionally biased toward basic residues. The residue at position 1315 (Ser-1315) is a Phosphoserine. Residue Lys-1331 is modified to N6-acetyllysine. Residues 1335-1439 (RRQSLELQKC…QCLLALLQKH (105 aa)) form the Bromo domain. Phosphoserine is present on residues Ser-1338, Ser-1464, Ser-1466, and Ser-1468. The segment at 1451–1479 (RKFPDRLADDEGDSDSESVGQSRGRRQKK) is disordered.

This sequence belongs to the WAL family. BAZ1B subfamily. As to quaternary structure, component of the WICH-1 ISWI chromatin remodeling complex, at least composed of SMARCA1 and BAZ1B/WSTF, which regulates the spacing of histone octamers on the DNA template to facilitate access to DNA. Within the WICH-1 ISWI chromatin remodeling complex interacts with SMARCA1; the interaction is direct. Component of the WICH-5 ISWI chromatin remodeling complex (also called the WICH complex), at least composed of SMARCA5/SNF2H and BAZ1B/WSTF, which regulates the spacing of histone octamers on the DNA template to facilitate access to DNA. Within the WICH-5 ISWI chromatin remodeling complex interacts with SMARCA5/SNF2H; the interaction is direct. Component of the B-WICH chromatin remodeling complex, at least composed of SMARCA5/SNF2H, BAZ1B/WSTF, SF3B1, DEK, MYO1C, ERCC6, MYBBP1A and DDX21. Within the B-WICH chromatin remodeling complex, interacts with SMARCA5/SNF2H, DDX21, DEK, MYBBP1A, SF3B1 and ERCC6. Interacts with MYO1C. Interacts with PCNA; the interaction is direct and is required for BAZ1B/WSTF binding to replication foci during S phase. Interacts with CDT1. Mn(2+) is required as a cofactor.

The protein resides in the nucleus. The enzyme catalyses L-tyrosyl-[protein] + ATP = O-phospho-L-tyrosyl-[protein] + ADP + H(+). Atypical tyrosine-protein kinase that plays a central role in chromatin remodeling and acts as a transcription regulator. Involved in DNA damage response by phosphorylating 'Tyr-142' of histone H2AX (H2AXY142ph). H2AXY142ph plays a central role in DNA repair and acts as a mark that distinguishes between apoptotic and repair responses to genotoxic stress. Regulatory subunit of the ATP-dependent WICH-1 and WICH-5 ISWI chromatin remodeling complexes, which form ordered nucleosome arrays on chromatin and facilitate access to DNA during DNA-templated processes such as DNA replication, transcription, and repair. Both complexes regulate the spacing of nucleosomes along the chromatin and have the ability to slide mononucleosomes to the center of a DNA template. The WICH-1 ISWI chromatin remodeling complex has a lower ATP hydrolysis rate than the WICH-5 ISWI chromatin remodeling complex. The WICH-5 ISWI chromatin remodeling complex regulates the transcription of various genes, has a role in RNA polymerase I transcription. Within the B-WICH complex has a role in RNA polymerase III transcription. Mediates the recruitment of the WICH-5 ISWI chromatin remodeling complex to replication foci during DNA replication. The sequence is that of Tyrosine-protein kinase BAZ1B (Baz1b) from Mus musculus (Mouse).